The chain runs to 295 residues: Acetylglutamate kinase (295 aa).

Residues Gly64–Gly65, Arg86, and Asn179 each bind substrate.

The protein belongs to the acetylglutamate kinase family. ArgB subfamily.

It localises to the cytoplasm. The enzyme catalyses N-acetyl-L-glutamate + ATP = N-acetyl-L-glutamyl 5-phosphate + ADP. The protein operates within amino-acid biosynthesis; L-arginine biosynthesis; N(2)-acetyl-L-ornithine from L-glutamate: step 2/4. Its function is as follows. Catalyzes the ATP-dependent phosphorylation of N-acetyl-L-glutamate. This is Acetylglutamate kinase from Thermosynechococcus vestitus (strain NIES-2133 / IAM M-273 / BP-1).